A 294-amino-acid chain; its full sequence is Beta-glucoside kinase (294 aa).

ATP is bound at residue 5–11; that stretch reads AFDIGGT.

This sequence belongs to the ROK (NagC/XylR) family.

The enzyme catalyses D-cellobiose + ATP = 6-phospho-beta-D-glucosyl-(1-&gt;4)-D-glucose + ADP + H(+). Catalyzes the ATP-dependent phosphorylation of cellobiose to produce cellobiose-6'-P. May have a dual role of kinase and transcriptional regulator of the cellobiose-PTS operon. The polypeptide is Beta-glucoside kinase (bglK) (Listeria monocytogenes serovar 1/2a (strain ATCC BAA-679 / EGD-e)).